We begin with the raw amino-acid sequence, 389 residues long: Methionyl-tRNA formyltransferase, mitochondrial (389 aa).

This sequence belongs to the Fmt family.

It is found in the mitochondrion. The catalysed reaction is L-methionyl-tRNA(fMet) + (6R)-10-formyltetrahydrofolate = N-formyl-L-methionyl-tRNA(fMet) + (6S)-5,6,7,8-tetrahydrofolate + H(+). In terms of biological role, methionyl-tRNA formyltransferase that formylates methionyl-tRNA in mitochondria and is crucial for translation initiation. The protein is Methionyl-tRNA formyltransferase, mitochondrial (MTFMT) of Homo sapiens (Human).